A 137-amino-acid chain; its full sequence is Large ribosomal subunit protein eL28 (137 aa).

The residue at position 2 (Ser-2) is an N-acetylserine. Glycyl lysine isopeptide (Lys-Gly) (interchain with G-Cter in SUMO2) cross-links involve residues Lys-58 and Lys-65. Ser-115 bears the Phosphoserine mark.

The protein belongs to the eukaryotic ribosomal protein eL28 family. As to quaternary structure, component of the large ribosomal subunit.

It localises to the cytoplasm. Component of the large ribosomal subunit. The ribosome is a large ribonucleoprotein complex responsible for the synthesis of proteins in the cell. This is Large ribosomal subunit protein eL28 (RPL28) from Homo sapiens (Human).